The primary structure comprises 717 residues: F-box only protein 42 (717 aa).

Residues 1–30 are compositionally biased toward acidic residues; the sequence is MASSSDSEDDSFMAVDQEETVLEGTMDQDE. The disordered stretch occupies residues 1 to 34; it reads MASSSDSEDDSFMAVDQEETVLEGTMDQDEEPHP. In terms of domain architecture, F-box spans 44–93; it reads NRSMSELPEEVLEYILSFLSPYQEHKTAALVCKQWYRLIKGVAHQCYHGF. Kelch repeat units follow at residues 132 to 184, 186 to 242, 244 to 293, and 295 to 342; these read SMYV…VYKD, LVLF…VIDD, MIVF…VIDD, and TILI…LWCH. Positions 361–474 are disordered; it reads RAPLSPSLNS…PSTPSAPEGY (114 aa). Low complexity predominate over residues 363 to 376; that stretch reads PLSPSLNSRPSPIS. Residues S365 and S373 each carry the phosphoserine modification. T378 carries the phosphothreonine modification. Polar residues-rich tracts occupy residues 416–426 and 455–469; these read QRQTPSGSREG and SLDS…STPS. S552 carries the post-translational modification Phosphoserine. The segment covering 570-596 has biased composition (low complexity); sequence GPSASAALSPPLGSSPGSPGSQSLSSG. A disordered region spans residues 570-631; it reads GPSASAALSP…GHHPPQSLNV (62 aa).

Component of some SCF complex, composed of CUL1, SKP1, RBX1 and FBXO42. Interacts (via the kelch domain) with p53/TP53; interaction is direct.

Its function is as follows. Substrate-recognition component of some SCF (SKP1-CUL1-F-box protein)-type E3 ubiquitin ligase complex. Specifically recognizes p53/TP53, promoting its ubiquitination and degradation. This Homo sapiens (Human) protein is F-box only protein 42 (FBXO42).